Consider the following 663-residue polypeptide: Telomere length regulator taz1 (663 aa).

The interval 15 to 72 (ENEGDQQFDKEVVQNSDSNIETGQISDSLTKAVEERAETESSSNLSNFTTSESESSKP) is disordered. Polar residues-rich tracts occupy residues 27–43 (VQNS…SDSL) and 54–67 (ESSS…TSES). Serine 332 is subject to Phosphoserine. 2 disordered regions span residues 389 to 412 (GSTA…TFSE) and 471 to 554 (RAKS…PYEG). 2 stretches are compositionally biased toward basic and acidic residues: residues 489–498 (KRGDNLRREA) and 512–524 (PPVR…ESRS). The Myb-like domain maps to 556–612 (RTRRKWTDEEENELYEMISQHGCCWSKIIHIQKLENGPLKTFGPTQIKDKARLIKAR).

Interacts with taf1 via the Myb domain, and ccq1.

It is found in the cytoplasm. The protein resides in the nucleus. It localises to the chromosome. The protein localises to the telomere. In terms of biological role, regulates telomere length and function. Required for the repression of telomere-adjacent gene expression and for normal meiosis or sporulation. It may be a negative regulator of the telomere-replicating enzyme, telomerase, or may protect against activation of telomerase-independent pathways of telomere elongation. It may be involved in the interactions between chromosomes and spindle proteins, disruption of these interactions would lead to defective meiosis. In Schizosaccharomyces pombe (strain 972 / ATCC 24843) (Fission yeast), this protein is Telomere length regulator taz1 (taz1).